Here is a 254-residue protein sequence, read N- to C-terminus: Putative epimerase LsrE (254 aa).

Residues 14–34 (VALLASYPLSVGILAGQWIAL) traverse the membrane as a helical segment. The a divalent metal cation site is built by histidine 50, aspartate 52, and histidine 81. Residue aspartate 52 is the Proton acceptor of the active site. Substrate is bound by residues histidine 81, 166 to 169 (GYGS), 199 to 201 (DGS), and 221 to 222 (GS). Aspartate 199 contributes to the a divalent metal cation binding site. Residue aspartate 199 is the Proton donor of the active site.

The protein belongs to the ribulose-phosphate 3-epimerase family. A divalent metal cation serves as cofactor.

It localises to the cell membrane. This Salmonella paratyphi A (strain ATCC 9150 / SARB42) protein is Putative epimerase LsrE (lsrE).